The chain runs to 486 residues: ATP synthase subunit beta (486 aa).

170–177 contributes to the ATP binding site; sequence GGAGVGKT.

The protein belongs to the ATPase alpha/beta chains family. In terms of assembly, F-type ATPases have 2 components, CF(1) - the catalytic core - and CF(0) - the membrane proton channel. CF(1) has five subunits: alpha(3), beta(3), gamma(1), delta(1), epsilon(1). CF(0) has three main subunits: a(1), b(2) and c(9-12). The alpha and beta chains form an alternating ring which encloses part of the gamma chain. CF(1) is attached to CF(0) by a central stalk formed by the gamma and epsilon chains, while a peripheral stalk is formed by the delta and b chains.

It localises to the cell membrane. It carries out the reaction ATP + H2O + 4 H(+)(in) = ADP + phosphate + 5 H(+)(out). Functionally, produces ATP from ADP in the presence of a proton gradient across the membrane. The catalytic sites are hosted primarily by the beta subunits. This Kineococcus radiotolerans (strain ATCC BAA-149 / DSM 14245 / SRS30216) protein is ATP synthase subunit beta.